Here is a 1347-residue protein sequence, read N- to C-terminus: Protocadherin-11 X-linked (1347 aa).

The N-terminal stretch at 1–23 (MDLLSGTYIFAVLLACVVFHSGA) is a signal peptide. At 24 to 812 (QEKNYTIREE…VSSPTNDYVK (789 aa)) the chain is on the extracellular side. Cadherin domains are found at residues 26–139 (KNYT…APLF), 140–249 (PATV…HPVF), 250–355 (KETE…VPSI), 362–466 (NPVN…APVF), 467–570 (TQSF…SPVF), 571–673 (THNE…KPVF), and 677–795 (PSNY…APVT). 3 N-linked (GlcNAc...) asparagine glycosylation sites follow: Asn27, Asn48, and Asn54. The N-linked (GlcNAc...) asparagine glycan is linked to Asn344. Residue Asn553 is glycosylated (N-linked (GlcNAc...) asparagine). Asn773 carries an N-linked (GlcNAc...) asparagine glycan. Residues 813–833 (ILVAAVAGTITVVVVIFITAV) traverse the membrane as a helical segment. Topologically, residues 834–1347 (VRCRQAPHLK…DSPIMEEHPL (514 aa)) are cytoplasmic. 3 disordered regions span residues 1057–1091 (LPEG…GYPQ), 1097–1116 (RATP…ESTF), and 1326–1347 (FTPR…EHPL).

It is found in the cell membrane. Potential calcium-dependent cell-adhesion protein. The protein is Protocadherin-11 X-linked (PCDH11X) of Gorilla gorilla gorilla (Western lowland gorilla).